The sequence spans 492 residues: Histone-lysine N-methyltransferase PRDM7 (492 aa).

The segment at 1–22 (MSPERSQEESPEGDTERTERKP) is disordered. Positions 23-86 (MVKDAFKDIS…RRQAIKLQVD (64 aa)) constitute a KRAB-related domain. The tract at residues 111-179 (EQSKHQKGMP…ELRRKETEGK (69 aa)) is disordered. Over residues 135–150 (GTPNLLNTSDSEQAQK) the composition is skewed to polar residues. Over residues 167–179 (LKLELRRKETEGK) the composition is skewed to basic and acidic residues. Positions 244–358 (PGLRIGPSGI…PGCELLVWSG (115 aa)) constitute an SET domain.

Its subcellular location is the nucleus. It is found in the chromosome. It carries out the reaction N(6),N(6)-dimethyl-L-lysyl(4)-[histone H3] + S-adenosyl-L-methionine = N(6),N(6),N(6)-trimethyl-L-lysyl(4)-[histone H3] + S-adenosyl-L-homocysteine + H(+). Histone methyltransferase that selectively methylates 'Lys-4' of dimethylated histone H3 (H3K4me2) to produce trimethylated 'Lys-4' histone H3 (H3K4me3). May play a role in epigenetic regulation of gene expression by defining an active chromatin state. The chain is Histone-lysine N-methyltransferase PRDM7 from Homo sapiens (Human).